A 473-amino-acid polypeptide reads, in one-letter code: GTPase Der (473 aa).

2 consecutive EngA-type G domains span residues 3-167 (LTIA…GKDK) and 204-379 (IRIA…RIWN). Residues 9–16 (GRPNVGKS), 56–60 (DTAGL), 119–122 (NKSE), 210–217 (GRPNTGKS), 257–261 (DTAGL), and 322–325 (NKWD) each bind GTP. The KH-like domain occupies 380 to 464 (RRISTGKLNR…PIRLSLRTSD (85 aa)).

The protein belongs to the TRAFAC class TrmE-Era-EngA-EngB-Septin-like GTPase superfamily. EngA (Der) GTPase family. In terms of assembly, associates with the 50S ribosomal subunit.

Its function is as follows. GTPase that plays an essential role in the late steps of ribosome biogenesis. This chain is GTPase Der, found in Bartonella bacilliformis (strain ATCC 35685 / KC583 / Herrer 020/F12,63).